A 542-amino-acid polypeptide reads, in one-letter code: Endonuclease 4 homolog (542 aa).

2 disordered regions span residues 89-123 (NEEI…QTSI) and 141-234 (PFFS…ENKF). Low complexity-rich tracts occupy residues 99–115 (SKKL…QQSK) and 147–170 (NNAS…TTTT). Positions 171 to 206 (TKKRNNKDEENEDDNEEEEEEEEEEEDKKSKKKTTT) form a coiled coil. A compositionally biased stretch (acidic residues) spans 179-196 (EENEDDNEEEEEEEEEEE). The span at 205-215 (TTTTTTTTTTA) shows a compositional bias: low complexity. A compositionally biased stretch (basic residues) spans 216 to 227 (YKKKSSPKKKKV). The Nuclear localization signal signature appears at 222–227 (PKKKKV). Residues His-328, His-368, Glu-404, Asp-438, His-441, His-475, Asp-488, His-490, and Glu-520 each coordinate Zn(2+).

This sequence belongs to the AP endonuclease 2 family. Requires Zn(2+) as cofactor.

It localises to the nucleus. The enzyme catalyses Endonucleolytic cleavage to 5'-phosphooligonucleotide end-products.. Functionally, plays a role in DNA repair. It cleaves phosphodiester bonds at apurinic or apyrimidinic sites (AP sites) to produce new 5'-ends that are base-free deoxyribose 5-phosphate residues. The protein is Endonuclease 4 homolog (apnA) of Dictyostelium discoideum (Social amoeba).